Consider the following 338-residue polypeptide: MKILGIESSCDETAAAVVEDGNKILSNIVATQIPFHKMYNGVVPEIASRKHTEWILPVVKQALAEAGLSLKEIDGIAATGRPGLMGSLLVGLTFAKTLAWSSNKPFIAVNHMLGHLYASHLENDIPYPYLGLLVSGGHSIICKVNNFDDIEVLGTTIDDAPGEAFDKVAKFYNLGYPGGAVIDKLAKSGNPKAANFPMPIIHKEGHKYDVSYSGLKTAVINQIDQFWNKDFEKTPENIAAAFQTRAVKILLRPLLDASIDTGLKTIVAGGGVAANSLLREKLAEHKELKCIFPSLKFCTDNAAMIAGLGYHYLKRGDRTPFTVEASARVEGFSKKGRQ.

The Fe cation site is built by histidine 111 and histidine 115. Substrate contacts are provided by residues 133–137 (LVSGG), aspartate 166, glycine 179, aspartate 183, and asparagine 275. Residue aspartate 300 participates in Fe cation binding.

It belongs to the KAE1 / TsaD family. It depends on Fe(2+) as a cofactor.

It is found in the cytoplasm. It catalyses the reaction L-threonylcarbamoyladenylate + adenosine(37) in tRNA = N(6)-L-threonylcarbamoyladenosine(37) in tRNA + AMP + H(+). Functionally, required for the formation of a threonylcarbamoyl group on adenosine at position 37 (t(6)A37) in tRNAs that read codons beginning with adenine. Is involved in the transfer of the threonylcarbamoyl moiety of threonylcarbamoyl-AMP (TC-AMP) to the N6 group of A37, together with TsaE and TsaB. TsaD likely plays a direct catalytic role in this reaction. The protein is tRNA N6-adenosine threonylcarbamoyltransferase of Treponema denticola (strain ATCC 35405 / DSM 14222 / CIP 103919 / JCM 8153 / KCTC 15104).